The primary structure comprises 1045 residues: Unconventional myosin-Ia (1045 aa).

Residues 11-697 (AAVGDLVMLD…TLFDLEKRRQ (687 aa)) enclose the Myosin motor domain. 104–111 (GESGAGKT) contributes to the ATP binding site. The segment at 574–596 (VATLMKNLYSKNPNYIRCIKPND) is actin-binding. IQ domains lie at 701 to 727 (AELA…RKSQ), 723 to 750 (MRKS…KRSV), and 746 to 774 (MKRS…RSDA). A TH1 domain is found at 861 to 1044 (KALYAQSLQQ…RGSHKMEILV (184 aa)).

Belongs to the TRAFAC class myosin-kinesin ATPase superfamily. Myosin family. Intestine.

Could play an important role in morphogenesis and function of intestinal microvilli. The protein is Unconventional myosin-Ia (MYO1A) of Gallus gallus (Chicken).